An 86-amino-acid polypeptide reads, in one-letter code: Large ribosomal subunit protein bL27 (86 aa).

This sequence belongs to the bacterial ribosomal protein bL27 family.

The sequence is that of Large ribosomal subunit protein bL27 from Koribacter versatilis (strain Ellin345).